Reading from the N-terminus, the 551-residue chain is MAAKDVKFSRDARERMLRGVNILADAVKVTLGPKGRNVVIDKSFGAPRITKDGVTVAKEIELEDKFENMGAQMVREVASKTNDIAGDGTTTATVLAQSIVQEGHKAVAAGMNPMDLKRGIDLAVSEVVAALGKAAKKIKTSEEVAQVGTISANGDESVGKMIAEAMQKVGNEGVITVEEAKTAETELEVVEGMQFDRGYLSPYFVTNADKMVADLEDAYILLHEKKLSNLQAMLPVLEAVVQTSKPLLIISEDVEGEALATLVVNKLRGGLKIAAVKAPGFGDRRKAMLEDIAILTGGQVISEDLGIKLENVGLNMLGRAKKVSISKENTTIVDGAGKKAEIQGRVAQIKQQIEETTSDYDKEKLQERLAKLAGGVAVIRVGGATEVEVKEKKDRVDDALNATRAAVEEGIVAGGGVALLRASANIKAAGANADQAAGINIVRRALQAPARQIASNAGAEASIVAGKILENKGATFGYNAQTGEYGDMIAMGIVDPVKVVRTALQDAASVAGLLVTTEAMIAEAPKKESAGGGMPGGMGGGGMGGMGGMDF.

Residues 30-33 (TLGP), Lys-51, 87-91 (DGTTT), Gly-415, and Asp-495 each bind ATP.

This sequence belongs to the chaperonin (HSP60) family. In terms of assembly, forms a cylinder of 14 subunits composed of two heptameric rings stacked back-to-back. Interacts with the co-chaperonin GroES.

It is found in the cytoplasm. It carries out the reaction ATP + H2O + a folded polypeptide = ADP + phosphate + an unfolded polypeptide.. In terms of biological role, together with its co-chaperonin GroES, plays an essential role in assisting protein folding. The GroEL-GroES system forms a nano-cage that allows encapsulation of the non-native substrate proteins and provides a physical environment optimized to promote and accelerate protein folding. This chain is Chaperonin GroEL 4, found in Mesorhizobium japonicum (strain LMG 29417 / CECT 9101 / MAFF 303099) (Mesorhizobium loti (strain MAFF 303099)).